A 465-amino-acid chain; its full sequence is tRNA modification GTPase MnmE (465 aa).

(6S)-5-formyl-5,6,7,8-tetrahydrofolate is bound by residues Arg-30, Glu-92, and Arg-132. The TrmE-type G domain maps to 227 to 388 (GLQVALVGRP…LIEAVLKTCG (162 aa)). Asn-237 provides a ligand contact to K(+). GTP is bound by residues 237 to 242 (NVGKSS), 256 to 262 (TDLPGTT), 281 to 284 (DTAG), and 342 to 345 (NKAD). Residue Ser-241 participates in Mg(2+) binding. K(+)-binding residues include Thr-256, Leu-258, and Thr-261. Thr-262 serves as a coordination point for Mg(2+). Lys-465 is a binding site for (6S)-5-formyl-5,6,7,8-tetrahydrofolate.

The protein belongs to the TRAFAC class TrmE-Era-EngA-EngB-Septin-like GTPase superfamily. TrmE GTPase family. In terms of assembly, homodimer. Heterotetramer of two MnmE and two MnmG subunits. K(+) serves as cofactor.

The protein resides in the cytoplasm. In terms of biological role, exhibits a very high intrinsic GTPase hydrolysis rate. Involved in the addition of a carboxymethylaminomethyl (cmnm) group at the wobble position (U34) of certain tRNAs, forming tRNA-cmnm(5)s(2)U34. This Prochlorococcus marinus (strain MIT 9303) protein is tRNA modification GTPase MnmE.